Reading from the N-terminus, the 115-residue chain is Nucleoid-associated protein LBL_0065 (115 aa).

This sequence belongs to the YbaB/EbfC family. Homodimer.

Its subcellular location is the cytoplasm. The protein localises to the nucleoid. Binds to DNA and alters its conformation. May be involved in regulation of gene expression, nucleoid organization and DNA protection. This Leptospira borgpetersenii serovar Hardjo-bovis (strain L550) protein is Nucleoid-associated protein LBL_0065.